The chain runs to 339 residues: Uroporphyrinogen decarboxylase (339 aa).

Residues 23–27 (RQAGR), Asp72, Tyr147, Ser202, and His315 each bind substrate.

The protein belongs to the uroporphyrinogen decarboxylase family. In terms of assembly, homodimer.

The protein resides in the cytoplasm. The enzyme catalyses uroporphyrinogen III + 4 H(+) = coproporphyrinogen III + 4 CO2. The protein operates within porphyrin-containing compound metabolism; protoporphyrin-IX biosynthesis; coproporphyrinogen-III from 5-aminolevulinate: step 4/4. Functionally, catalyzes the decarboxylation of four acetate groups of uroporphyrinogen-III to yield coproporphyrinogen-III. The sequence is that of Uroporphyrinogen decarboxylase from Desulfotalea psychrophila (strain LSv54 / DSM 12343).